Here is a 127-residue protein sequence, read N- to C-terminus: uncharacterized protein (127 aa).

A helical transmembrane segment spans residues 85-107; the sequence is VYLGKIGFVLLHVFYLSCIAYYD.

Its subcellular location is the mitochondrion membrane. This is an uncharacterized protein from Dictyostelium discoideum (Social amoeba).